Consider the following 361-residue polypeptide: Mannose-1-phosphate guanyltransferase 2 (361 aa).

The protein belongs to the transferase hexapeptide repeat family.

Its subcellular location is the cytoplasm. The catalysed reaction is alpha-D-mannose 1-phosphate + GTP + H(+) = GDP-alpha-D-mannose + diphosphate. It functions in the pathway nucleotide-sugar biosynthesis; GDP-alpha-D-mannose biosynthesis; GDP-alpha-D-mannose from alpha-D-mannose 1-phosphate (GTP route): step 1/1. Involved in cell wall synthesis where it is required for glycosylation. Involved in cell cycle progression through cell-size checkpoint. This chain is Mannose-1-phosphate guanyltransferase 2 (MPG1), found in Candida glabrata (strain ATCC 2001 / BCRC 20586 / JCM 3761 / NBRC 0622 / NRRL Y-65 / CBS 138) (Yeast).